Here is a 273-residue protein sequence, read N- to C-terminus: Histidine racemase (273 aa).

Cysteine 72 functions as the Proton acceptor in the catalytic mechanism. Catalysis depends on cysteine 211, which acts as the Proton donor.

The protein belongs to the histidine racemase family. Homodimer.

It is found in the cytoplasm. The catalysed reaction is L-histidine = D-histidine. Isomerase that catalyzes the conversion of L-histidine to D-histidine. Functions the biosynthesis of the metallophore staphylopine, which is involved in the acquisition of nickel, cobalt, zinc, copper, and iron, and thus enables bacterial growth inside the host, where metal access is limited. Therefore, this enzyme probably contributes to staphylococcal virulence. The reaction is reversible in vitro, the enzyme can produce D-histidine from the L-stereoisomer and vice versa. Appears to be specific for histidine as it cannot use other amino acids as substrate, including L-alanine and L-methionine. The polypeptide is Histidine racemase (Staphylococcus aureus (strain Mu50 / ATCC 700699)).